The following is a 271-amino-acid chain: Formamidopyrimidine-DNA glycosylase (271 aa).

The active-site Schiff-base intermediate with DNA is the Pro-2. Glu-3 functions as the Proton donor in the catalytic mechanism. Lys-57 functions as the Proton donor; for beta-elimination activity in the catalytic mechanism. His-90, Arg-109, and Lys-151 together coordinate DNA. The segment at 236–270 (HVYGRGGETCTSCGNLLSEIRLGQRTTVFCGICQT) adopts an FPG-type zinc-finger fold. Arg-260 (proton donor; for delta-elimination activity) is an active-site residue.

Belongs to the FPG family. As to quaternary structure, monomer. Zn(2+) is required as a cofactor.

It carries out the reaction Hydrolysis of DNA containing ring-opened 7-methylguanine residues, releasing 2,6-diamino-4-hydroxy-5-(N-methyl)formamidopyrimidine.. The catalysed reaction is 2'-deoxyribonucleotide-(2'-deoxyribose 5'-phosphate)-2'-deoxyribonucleotide-DNA = a 3'-end 2'-deoxyribonucleotide-(2,3-dehydro-2,3-deoxyribose 5'-phosphate)-DNA + a 5'-end 5'-phospho-2'-deoxyribonucleoside-DNA + H(+). Involved in base excision repair of DNA damaged by oxidation or by mutagenic agents. Acts as a DNA glycosylase that recognizes and removes damaged bases. Has a preference for oxidized purines, such as 7,8-dihydro-8-oxoguanine (8-oxoG). Has AP (apurinic/apyrimidinic) lyase activity and introduces nicks in the DNA strand. Cleaves the DNA backbone by beta-delta elimination to generate a single-strand break at the site of the removed base with both 3'- and 5'-phosphates. The polypeptide is Formamidopyrimidine-DNA glycosylase (Shewanella sp. (strain W3-18-1)).